A 388-amino-acid chain; its full sequence is Tryptophan synthase beta chain (388 aa).

Position 86 is an N6-(pyridoxal phosphate)lysine (Lys86).

It belongs to the TrpB family. Tetramer of two alpha and two beta chains. It depends on pyridoxal 5'-phosphate as a cofactor.

It catalyses the reaction (1S,2R)-1-C-(indol-3-yl)glycerol 3-phosphate + L-serine = D-glyceraldehyde 3-phosphate + L-tryptophan + H2O. It participates in amino-acid biosynthesis; L-tryptophan biosynthesis; L-tryptophan from chorismate: step 5/5. The beta subunit is responsible for the synthesis of L-tryptophan from indole and L-serine. This Buchnera aphidicola subsp. Acyrthosiphon pisum (strain APS) (Acyrthosiphon pisum symbiotic bacterium) protein is Tryptophan synthase beta chain (trpB).